We begin with the raw amino-acid sequence, 247 residues long: 3-deoxy-manno-octulosonate cytidylyltransferase (247 aa).

The protein belongs to the KdsB family.

The protein resides in the cytoplasm. It carries out the reaction 3-deoxy-alpha-D-manno-oct-2-ulosonate + CTP = CMP-3-deoxy-beta-D-manno-octulosonate + diphosphate. It participates in nucleotide-sugar biosynthesis; CMP-3-deoxy-D-manno-octulosonate biosynthesis; CMP-3-deoxy-D-manno-octulosonate from 3-deoxy-D-manno-octulosonate and CTP: step 1/1. It functions in the pathway bacterial outer membrane biogenesis; lipopolysaccharide biosynthesis. Activates KDO (a required 8-carbon sugar) for incorporation into bacterial lipopolysaccharide in Gram-negative bacteria. This chain is 3-deoxy-manno-octulosonate cytidylyltransferase, found in Rhodopseudomonas palustris (strain BisA53).